The following is a 92-amino-acid chain: UPF0250 protein XOO3732 (92 aa).

Belongs to the UPF0250 family.

This Xanthomonas oryzae pv. oryzae (strain MAFF 311018) protein is UPF0250 protein XOO3732.